A 140-amino-acid chain; its full sequence is uncharacterized protein (140 aa).

Residues 3 to 131 (RLDHIGIAVF…NGVLVELCEP (129 aa)) enclose the VOC domain. Residues His-6, Glu-53, His-77, and Glu-127 each contribute to the a divalent metal cation site.

It belongs to the methylmalonyl-CoA epimerase family.

This is an uncharacterized protein from Bacillus subtilis (strain 168).